A 492-amino-acid polypeptide reads, in one-letter code: MASPTNAPGSQSQTSVSSANHPDPIIHGREILETLVSHLLASKRSLSSISTVWRANEIVTSAKTALEESVILNARTGFLQSGINEQMKVLMKVRNSIECVYNDGQKDFKNVLHTLDAANARLESTMDVLRSTMVDAAFRPAGEEPRSLLDFVDEQGVEGMRDGLKELIRESKETQKEFDTSLLSFDDDLRSLRSGFKNTKVSPPSYSPIPSHLATLEGHAQEMAALLSSLSSHFDLCLNAIRHTEGGYAAVRNAASNPPPGAEPVSVSGVMNTSHDDINEEPLTEHEREEMLFVLEKDAAEVEDVVMELRDRQNEMEIKHDAILDHVSHLTEQFKQTTSIYKILEGVYERLPGYIIAGQDFRARWEDTKAQICGQMDDLEGMRLFYENYLSSYDGLILEVRRRKVAEEKAKTIAKKAMEQISKIYDADMKERHDFKHDVGDYLPVDLYPGINAAAPRWEFRLMEDEEAVNSSPSLERELVEVSSKRDGEAQG.

Polar residues predominate over residues 1 to 20 (MASPTNAPGSQSQTSVSSAN). Disordered stretches follow at residues 1 to 23 (MASP…NHPD) and 469 to 492 (VNSS…EAQG). Residues 475-492 (LERELVEVSSKRDGEAQG) are compositionally biased toward basic and acidic residues.

The protein belongs to the ATG17 family.

The protein resides in the cytoplasm. Its subcellular location is the preautophagosomal structure membrane. Its function is as follows. Autophagy-specific protein that functions in response to autophagy-inducing signals as a scaffold to recruit other ATG proteins to organize pre-autophagosomal structure (PAS) formation. Modulates the timing and magnitude of the autophagy response, such as the size of the sequestering vesicles. Plays particularly a role in pexophagy and nucleophagy. This chain is Autophagy-related protein 17 (atg17), found in Sclerotinia sclerotiorum (strain ATCC 18683 / 1980 / Ss-1) (White mold).